A 267-amino-acid polypeptide reads, in one-letter code: Tetrahydromethanopterin S-methyltransferase subunit C (267 aa).

Transmembrane regions (helical) follow at residues 19 to 39 (IMAIGAIGGLAGIYLGNFMPA), 40 to 60 (QFSFFGGLGAICAMVWGADAV), 75 to 95 (IGMISLGMGIVAALFGLSVGG), 96 to 116 (IAGPIVSFIAAAIIGAVIGVL), 131 to 151 (AMVEIAGAGTLVIIGLSVVIA), 162 to 182 (YVVANGYIALIFIIGGMGILH), and 221 to 241 (GLMAAGLNIAVGVIIWAWAFM).

The protein belongs to the MtrC family. As to quaternary structure, the complex is composed of 8 subunits; MtrA, MtrB, MtrC, MtrD, MtrE, MtrF, MtrG and MtrH.

Its subcellular location is the cell membrane. The catalysed reaction is 5-methyl-5,6,7,8-tetrahydromethanopterin + coenzyme M + 2 Na(+)(in) = 5,6,7,8-tetrahydromethanopterin + methyl-coenzyme M + 2 Na(+)(out). It participates in one-carbon metabolism; methanogenesis from CO(2); methyl-coenzyme M from 5,10-methylene-5,6,7,8-tetrahydromethanopterin: step 2/2. Its function is as follows. Part of a complex that catalyzes the formation of methyl-coenzyme M and tetrahydromethanopterin from coenzyme M and methyl-tetrahydromethanopterin. This is an energy-conserving, sodium-ion translocating step. The sequence is that of Tetrahydromethanopterin S-methyltransferase subunit C from Methanosarcina acetivorans (strain ATCC 35395 / DSM 2834 / JCM 12185 / C2A).